Consider the following 397-residue polypeptide: Iron-sulfur cluster assembly SufBD family protein Rv1462 (397 aa).

Thr-2 carries the N-acetylthreonine modification.

This sequence belongs to the iron-sulfur cluster assembly SufBD family.

This is Iron-sulfur cluster assembly SufBD family protein Rv1462 from Mycobacterium tuberculosis (strain ATCC 25618 / H37Rv).